Consider the following 302-residue polypeptide: 3-methyl-2-oxobutanoate hydroxymethyltransferase 1 (302 aa).

D75 and D118 together coordinate Mg(2+). Residues 75–76, D118, and K147 each bind 3-methyl-2-oxobutanoate; that span reads DS. E149 is a Mg(2+) binding site. E217 functions as the Proton acceptor in the catalytic mechanism.

Belongs to the PanB family. Homodecamer; pentamer of dimers. The cofactor is Mg(2+).

It is found in the cytoplasm. The catalysed reaction is 3-methyl-2-oxobutanoate + (6R)-5,10-methylene-5,6,7,8-tetrahydrofolate + H2O = 2-dehydropantoate + (6S)-5,6,7,8-tetrahydrofolate. It participates in cofactor biosynthesis; (R)-pantothenate biosynthesis; (R)-pantoate from 3-methyl-2-oxobutanoate: step 1/2. Catalyzes the reversible reaction in which hydroxymethyl group from 5,10-methylenetetrahydrofolate is transferred onto alpha-ketoisovalerate to form ketopantoate. The sequence is that of 3-methyl-2-oxobutanoate hydroxymethyltransferase 1 from Zymomonas mobilis subsp. mobilis (strain ATCC 31821 / ZM4 / CP4).